Reading from the N-terminus, the 301-residue chain is Probable alpha-L-glutamate ligase (301 aa).

The ATP-grasp domain maps to 104 to 287 (LQLMSRKGLG…VASMIIKHIE (184 aa)). ATP contacts are provided by residues Lys-141, 178–179 (EY), Asp-187, and 211–213 (RSN). Mg(2+)-binding residues include Asp-248, Glu-260, and Asn-262. 3 residues coordinate Mn(2+): Asp-248, Glu-260, and Asn-262.

Belongs to the RimK family. Requires Mg(2+) as cofactor. It depends on Mn(2+) as a cofactor.

This is Probable alpha-L-glutamate ligase from Marinomonas sp. (strain MWYL1).